Consider the following 149-residue polypeptide: SsrA-binding protein (149 aa).

A disordered region spans residues 121–149; that stretch reads GKKQHDKRADELDKDSKREAQRAMKERQR. The span at 127-149 shows a compositional bias: basic and acidic residues; it reads KRADELDKDSKREAQRAMKERQR.

It belongs to the SmpB family.

Its subcellular location is the cytoplasm. In terms of biological role, required for rescue of stalled ribosomes mediated by trans-translation. Binds to transfer-messenger RNA (tmRNA), required for stable association of tmRNA with ribosomes. tmRNA and SmpB together mimic tRNA shape, replacing the anticodon stem-loop with SmpB. tmRNA is encoded by the ssrA gene; the 2 termini fold to resemble tRNA(Ala) and it encodes a 'tag peptide', a short internal open reading frame. During trans-translation Ala-aminoacylated tmRNA acts like a tRNA, entering the A-site of stalled ribosomes, displacing the stalled mRNA. The ribosome then switches to translate the ORF on the tmRNA; the nascent peptide is terminated with the 'tag peptide' encoded by the tmRNA and targeted for degradation. The ribosome is freed to recommence translation, which seems to be the essential function of trans-translation. This chain is SsrA-binding protein, found in Dechloromonas aromatica (strain RCB).